Consider the following 233-residue polypeptide: B-cell lymphoma/leukemia 10 (233 aa).

M1 bears the N-acetylmethionine mark. A CARD domain is found at 13 to 101 (LTEVKKDALE…QSFLIQKITD (89 aa)). Glycyl lysine isopeptide (Lys-Gly) (interchain with G-Cter in ubiquitin) cross-links involve residues K17, K31, and K63. A Phosphoserine modification is found at S138. Residues 185–233 (SSFSSATLPRPGDPGAPPLPPDLRLEEGGSCGNSSEMFLPLRSRALSRQ) form a disordered region. Residues 195–205 (PGDPGAPPLPP) are compositionally biased toward pro residues.

As to quaternary structure, homomultimer; homooligomerized following recruitment by CARD domain-containing proteins that form a nucleating helical template that recruits BCL10 via CARD-CARD interaction. Self-associates by CARD-CARD interaction and interacts with other CARD-proteins such as CARD9, CARD10, CARD11 and CARD14. Forms a complex with CARD14 and MALT1; resulting in the formation of a CBM (CARD14-BCL10-MALT1) complex. Forms a complex with CARD11 and MALT1; resulting in the formation of a CBM (CARD11-BCL10-MALT1) complex. Forms a complex with CARD9 and MALT1; resulting in the formation of a CBM (CARD9-BCL10-MALT1) complex. Found in a membrane raft complex, at least composed of BCL10, CARD11, DPP4 and IKBKB. Binds caspase-9 with its C-terminal domain. Interacts with TRAF2 and BIRC2/c-IAP2. Interacts with PELI2 and SOCS3; these interactions may be mutually exclusive. Phosphorylated by IKBKB/IKKB. Post-translationally, ubiquitinated via both 'Lys-63'-linked and linear ('Met-1'-linked) polyubiquitin chains in response to T-cell receptor (TCR) activation. Ubiquitination is recognized by IKBKG/NEMO, the regulatory subunit of I-kappa-B kinase (IKK), and is required for TCR-induced NF-kappa-B activation. Linear ubiquitination at Lys-17, Lys-31 and Lys-63 is mediated by RNF31/HOIP; linear ubiquitination is recognized with much higher affinity than 'Lys-63'-linked ubiquitin by IKBKG/NEMO. CARD11 is required for linear ubiquitination by HOIP by promoting the targeting of BCL10 to RNF31/HOIP. In terms of processing, proteolytically cleaved by MALT1; required for T-cell activation. As to expression, highly expressed in heart, brain, spleen, lung, liver, skeletal muscle, kidney and testis. Detected in developing brain, olfactory epithelium, tongue, whisker follicles, salivary gland, heart, lung, liver and intestinal epithelia of stage 15 embryos.

It is found in the cytoplasm. The protein resides in the membrane raft. Functionally, plays a key role in both adaptive and innate immune signaling by bridging CARD domain-containing proteins to immune activation. Acts by channeling adaptive and innate immune signaling downstream of CARD domain-containing proteins CARD9, CARD11 and CARD14 to activate NF-kappa-B and MAP kinase p38 (MAPK11, MAPK12, MAPK13 and/or MAPK14) pathways which stimulate expression of genes encoding pro-inflammatory cytokines and chemokines. Recruited by activated CARD domain-containing proteins: homooligomerized CARD domain-containing proteins form a nucleating helical template that recruits BCL10 via CARD-CARD interaction, thereby promoting polymerization of BCL10, subsequent recruitment of MALT1 and formation of a CBM complex. This leads to activation of NF-kappa-B and MAP kinase p38 (MAPK11, MAPK12, MAPK13 and/or MAPK14) pathways which stimulate expression of genes encoding pro-inflammatory cytokines and chemokines. Activated by CARD9 downstream of C-type lectin receptors; CARD9-mediated signals are essential for antifungal immunity. Activated by CARD11 downstream of T-cell receptor (TCR) and B-cell receptor (BCR). Promotes apoptosis, pro-caspase-9 maturation and activation of NF-kappa-B via NIK and IKK. This is B-cell lymphoma/leukemia 10 (Bcl10) from Mus musculus (Mouse).